The chain runs to 542 residues: CTP synthase (542 aa).

The segment at 1–265 (MARYVFITGG…DSEVLSAFGI (265 aa)) is amidoligase domain. Ser-13 serves as a coordination point for CTP. Position 13 (Ser-13) interacts with UTP. ATP is bound at residue 14–19 (SLGKGI). Tyr-54 provides a ligand contact to L-glutamine. ATP is bound at residue Asp-71. Mg(2+)-binding residues include Asp-71 and Glu-139. CTP-binding positions include 146-148 (DIE), 186-191 (KTKPTQ), and Lys-222. Residues 186–191 (KTKPTQ) and Lys-222 contribute to the UTP site. One can recognise a Glutamine amidotransferase type-1 domain in the interval 291-541 (TIAVVGKYTG…IEAAIEQSRL (251 aa)). Residue Gly-353 participates in L-glutamine binding. Cys-380 functions as the Nucleophile; for glutamine hydrolysis in the catalytic mechanism. L-glutamine-binding positions include 381-384 (FGMQ), Glu-404, and Arg-469. Catalysis depends on residues His-514 and Glu-516.

Belongs to the CTP synthase family. In terms of assembly, homotetramer.

The enzyme catalyses UTP + L-glutamine + ATP + H2O = CTP + L-glutamate + ADP + phosphate + 2 H(+). It carries out the reaction L-glutamine + H2O = L-glutamate + NH4(+). It catalyses the reaction UTP + NH4(+) + ATP = CTP + ADP + phosphate + 2 H(+). It functions in the pathway pyrimidine metabolism; CTP biosynthesis via de novo pathway; CTP from UDP: step 2/2. With respect to regulation, allosterically activated by GTP, when glutamine is the substrate; GTP has no effect on the reaction when ammonia is the substrate. The allosteric effector GTP functions by stabilizing the protein conformation that binds the tetrahedral intermediate(s) formed during glutamine hydrolysis. Inhibited by the product CTP, via allosteric rather than competitive inhibition. Catalyzes the ATP-dependent amination of UTP to CTP with either L-glutamine or ammonia as the source of nitrogen. Regulates intracellular CTP levels through interactions with the four ribonucleotide triphosphates. This is CTP synthase from Brucella suis (strain ATCC 23445 / NCTC 10510).